The sequence spans 145 residues: Large ribosomal subunit protein uL14m (145 aa).

A mitochondrion-targeting transit peptide spans 1-30 (MAVLTGLFGFFAYVRGAVSQRCFSTSGSLS).

The protein belongs to the universal ribosomal protein uL14 family. In terms of assembly, component of the mitochondrial ribosome large subunit (39S) which comprises a 16S rRNA and about 50 distinct proteins. Interacts with MALSU1.

It localises to the mitochondrion. Functionally, may form part of 2 intersubunit bridges in the assembled ribosome. Upon binding to MALSU1, intersubunit bridge formation is blocked, preventing ribosome formation and repressing translation. The protein is Large ribosomal subunit protein uL14m (Mrpl14) of Rattus norvegicus (Rat).